Consider the following 244-residue polypeptide: 3-oxoacyl-[acyl-carrier-protein] reductase FabG (244 aa).

NADP(+) is bound by residues 9 to 12 (GASR), 60 to 61 (NV), and asparagine 87. Serine 139 contributes to the substrate binding site. Tyrosine 152 (proton acceptor) is an active-site residue. NADP(+) contacts are provided by residues 152-156 (YVATK) and isoleucine 185.

Belongs to the short-chain dehydrogenases/reductases (SDR) family. Homotetramer.

The catalysed reaction is a (3R)-hydroxyacyl-[ACP] + NADP(+) = a 3-oxoacyl-[ACP] + NADPH + H(+). It participates in lipid metabolism; fatty acid biosynthesis. In terms of biological role, catalyzes the NADPH-dependent reduction of beta-ketoacyl-ACP substrates to beta-hydroxyacyl-ACP products, the first reductive step in the elongation cycle of fatty acid biosynthesis. The chain is 3-oxoacyl-[acyl-carrier-protein] reductase FabG (fabG) from Staphylococcus epidermidis (strain ATCC 35984 / DSM 28319 / BCRC 17069 / CCUG 31568 / BM 3577 / RP62A).